A 226-amino-acid polypeptide reads, in one-letter code: MAEVIIELKSVERHYVQGPRKLTILNGADFSLKRGEMVALVAPSGTGKSTLLHTAGLLERPDAGDVILAGRACGRLSDDERTAIRRNDVGFVYQFHHLLPEFSALENIMMPQLIKGLPRKEAAERAAQLLDYMQIGKRASHRPSELSGGEQQRVAIARAVANAPLVLLADEPTGNLDPVTASYVFEALGALVKQSGLAALIATHNHELASRMDRRVTLADGKVVPL.

The ABC transporter domain occupies 6-226 (IELKSVERHY…TLADGKVVPL (221 aa)). 42–49 (APSGTGKS) contacts ATP.

Belongs to the ABC transporter superfamily. Lipoprotein translocase (TC 3.A.1.125) family. As to quaternary structure, the complex is composed of two ATP-binding proteins (LolD) and two transmembrane proteins (LolC and LolE).

The protein localises to the cell inner membrane. Functionally, part of the ABC transporter complex LolCDE involved in the translocation of mature outer membrane-directed lipoproteins, from the inner membrane to the periplasmic chaperone, LolA. Responsible for the formation of the LolA-lipoprotein complex in an ATP-dependent manner. The sequence is that of Lipoprotein-releasing system ATP-binding protein LolD from Mesorhizobium japonicum (strain LMG 29417 / CECT 9101 / MAFF 303099) (Mesorhizobium loti (strain MAFF 303099)).